The following is a 279-amino-acid chain: Aldo-keto reductase Mvan_2161 (279 aa).

The Proton donor role is filled by Y54. L194, V196, I232, R234, S235, R240, S243, N244, and R270 together coordinate NADPH.

Belongs to the aldo/keto reductase family.

The sequence is that of Aldo-keto reductase Mvan_2161 from Mycolicibacterium vanbaalenii (strain DSM 7251 / JCM 13017 / BCRC 16820 / KCTC 9966 / NRRL B-24157 / PYR-1) (Mycobacterium vanbaalenii).